The chain runs to 244 residues: Diablo homolog, mitochondrial (244 aa).

The transit peptide at 1–38 (MASLPRRLIWSFSYILRESFPIVSRRNCVSLLRASWRK) directs the protein to the mitochondrion. Residues 50 to 54 (AIPVG) carry the IAP-binding motif. Over residues 207 to 218 (DEIKRTITEDKG) the composition is skewed to basic and acidic residues. The tract at residues 207–244 (DEIKRTITEDKGNPPSGGSPRSSLSEEEEIPEAYLRED) is disordered. Positions 220–229 (PPSGGSPRSS) are enriched in low complexity.

It belongs to the Smac/DIABLO protein family. In terms of assembly, homodimer.

The protein localises to the mitochondrion. Functionally, promotes apoptosis. Acts by opposing the inhibitory activity of inhibitor of apoptosis proteins (IAP). This Xenopus tropicalis (Western clawed frog) protein is Diablo homolog, mitochondrial.